The primary structure comprises 266 residues: Undecaprenyl-diphosphatase (266 aa).

8 consecutive transmembrane segments (helical) span residues 4 to 24 (ILSA…PISS), 39 to 59 (LSII…IIYY), 86 to 106 (LKLI…GTFI), 112 to 132 (MFTL…ILML), 145 to 165 (ILLA…PGIS), 182 to 202 (KSAF…AILL), 210 to 230 (IFMV…FVVG), and 246 to 266 (LYYF…FVRI).

This sequence belongs to the UppP family.

It is found in the cell inner membrane. The enzyme catalyses di-trans,octa-cis-undecaprenyl diphosphate + H2O = di-trans,octa-cis-undecaprenyl phosphate + phosphate + H(+). In terms of biological role, catalyzes the dephosphorylation of undecaprenyl diphosphate (UPP). Confers resistance to bacitracin. The chain is Undecaprenyl-diphosphatase from Borreliella burgdorferi (strain ATCC 35210 / DSM 4680 / CIP 102532 / B31) (Borrelia burgdorferi).